A 94-amino-acid polypeptide reads, in one-letter code: Large ribosomal subunit protein eL42 (94 aa).

Zn(2+)-binding residues include Cys11, Cys14, Cys71, and Cys74. Residues 11–74 (CPFCKKHTIH…LDLRFRCTEC (64 aa)) form a C4-type zinc finger.

Belongs to the eukaryotic ribosomal protein eL42 family. As to quaternary structure, part of the 50S ribosomal subunit. Zn(2+) is required as a cofactor.

Its function is as follows. Binds to the 23S rRNA. The sequence is that of Large ribosomal subunit protein eL42 from Pyrococcus furiosus (strain ATCC 43587 / DSM 3638 / JCM 8422 / Vc1).